The chain runs to 124 residues: MATVNQLVRKPRARKVAKSNVPALEACPQKRGVCTRVYTTTPKKPNSALRKVCRVRLTNGFEVTSYIGGEGHNLQEHSVILIRGGRVKDLPGVRYHTVRGALDCSGVKDRKQARSKYGVKRPKA.

A 3-methylthioaspartic acid modification is found at Asp89. Residue Lys108 is modified to N6-acetyllysine.

The protein belongs to the universal ribosomal protein uS12 family. In terms of assembly, part of the 30S ribosomal subunit. Contacts proteins S8 and S17. May interact with IF1 in the 30S initiation complex.

In terms of biological role, with S4 and S5 plays an important role in translational accuracy. Its function is as follows. Interacts with and stabilizes bases of the 16S rRNA that are involved in tRNA selection in the A site and with the mRNA backbone. Located at the interface of the 30S and 50S subunits, it traverses the body of the 30S subunit contacting proteins on the other side and probably holding the rRNA structure together. The combined cluster of proteins S8, S12 and S17 appears to hold together the shoulder and platform of the 30S subunit. The sequence is that of Small ribosomal subunit protein uS12 from Escherichia coli O139:H28 (strain E24377A / ETEC).